The sequence spans 219 residues: Probable 3-beta-hydroxysteroid-Delta(8),Delta(7)-isomerase (219 aa).

Transmembrane regions (helical) follow at residues 29–49 (ILVPYLATSLFLLLAVWLISG), 62–82 (LMCWWAFTGLTHIIIEGTFVF), 119–139 (VEGITAVLEGPASLLAVYAIA), and 181–201 (FWAYFIGANSSWVVIPTMIAI). Residues 58–200 (TDRWLMCWWA…SWVVIPTMIA (143 aa)) enclose the EXPERA domain.

This sequence belongs to the EBP family.

It is found in the endoplasmic reticulum membrane. The catalysed reaction is lathosterol = 5alpha-cholest-8-en-3beta-ol. It functions in the pathway steroid biosynthesis; sterol biosynthesis. Catalyzes the conversion of Delta(8)-sterols to their corresponding Delta(7)-isomers. This chain is Probable 3-beta-hydroxysteroid-Delta(8),Delta(7)-isomerase, found in Oryza sativa subsp. japonica (Rice).